Here is a 259-residue protein sequence, read N- to C-terminus: Eukaryotic translation initiation factor 3 subunit G-2 (259 aa).

Positions 179–257 (SAVRISNLSE…LILSVEWSKP (79 aa)) constitute an RRM domain.

The protein belongs to the eIF-3 subunit G family. Component of the eukaryotic translation initiation factor 3 (eIF-3) complex. The eIF-3 complex interacts with pix.

It localises to the cytoplasm. Functionally, RNA-binding component of the eukaryotic translation initiation factor 3 (eIF-3) complex, which is involved in protein synthesis of a specialized repertoire of mRNAs and, together with other initiation factors, stimulates binding of mRNA and methionyl-tRNAi to the 40S ribosome. The eIF-3 complex specifically targets and initiates translation of a subset of mRNAs involved in cell proliferation. This subunit can bind 18S rRNA. This is Eukaryotic translation initiation factor 3 subunit G-2 from Drosophila virilis (Fruit fly).